Reading from the N-terminus, the 56-residue chain is Small ribosomal subunit protein uS14 (56 aa).

Residues cysteine 21, cysteine 24, cysteine 39, and cysteine 42 each coordinate Zn(2+).

The protein belongs to the universal ribosomal protein uS14 family. In terms of assembly, component of the small ribosomal subunit (SSU). Mature N.crassa ribosomes consist of a small (40S) and a large (60S) subunit. The 40S small subunit contains 1 molecule of ribosomal RNA (18S rRNA) and at least 32 different proteins. The large 60S subunit contains 3 rRNA molecules (26S, 5.8S and 5S rRNA) and at least 42 different proteins. The cofactor is Zn(2+).

It localises to the cytoplasm. Its function is as follows. Component of the ribosome, a large ribonucleoprotein complex responsible for the synthesis of proteins in the cell. The small ribosomal subunit (SSU) binds messenger RNAs (mRNAs) and translates the encoded message by selecting cognate aminoacyl-transfer RNA (tRNA) molecules. The large subunit (LSU) contains the ribosomal catalytic site termed the peptidyl transferase center (PTC), which catalyzes the formation of peptide bonds, thereby polymerizing the amino acids delivered by tRNAs into a polypeptide chain. The nascent polypeptides leave the ribosome through a tunnel in the LSU and interact with protein factors that function in enzymatic processing, targeting, and the membrane insertion of nascent chains at the exit of the ribosomal tunnel. This is Small ribosomal subunit protein uS14 (rps-29) from Neurospora crassa (strain ATCC 24698 / 74-OR23-1A / CBS 708.71 / DSM 1257 / FGSC 987).